Consider the following 554-residue polypeptide: MSAAVALAVILAVYVVLRYISSPRGRSKPLNLPPGPRGWPVIGSLGALAGALPPHRALAALAARHGPLMHLRLGSYHAVVASSADTARLVLKVHDLAFADRPRTAAGEVASYGYLGIVHTPYGAYWRMARKLCATELFSARRVDSFERVRAQEMRALARGLFECAGRGAVAVREHVAGATLRNILRMAVGEKWSGCYGSPEGEAFRRTLDEAFAVTGAVSNVGEWVPWLGWLDLQGCVRRMKRLRAQYDRFFEQILDDHDHKKTRRERGRPGAGDSAADDDLVDVLLRLVEEDEDRPETTEASRLTRDGVKAFVQDIVAGGTESSAVTIEWAMSELLRRPDALRAATAELDRVIGHGRWVTERDLPDLPYIDAVVKETMRLHPVGPLLVPHHAREHTVVAGYDVPAGARVLVNVWAIARDPASWPDAPDAFRPERFLNGSSGASVDVRGAHFELLPFGAGRRMCPAHGLAMKLVTAGVANLVHGFAWRLPDGMAPEDVSMEELFGLSTRRKVPLVAVAEPRLPAHLYTNVTPPQQVAGSTIANLSTRPEYKLVF.

Residues M1–S21 traverse the membrane as a helical segment. Residue C464 coordinates heme.

This sequence belongs to the cytochrome P450 family. Requires heme as cofactor.

The protein resides in the membrane. It carries out the reaction (6E,10E)-geranyllinalool + reduced [NADPH--hemoprotein reductase] + O2 = (3E,7E)-4,8,12-trimethyltrideca 1,3,7,11-tetraene + but-3-en-2-one + oxidized [NADPH--hemoprotein reductase] + 2 H2O + H(+). The protein operates within secondary metabolite biosynthesis; terpenoid biosynthesis. Component of the volatile terpenes biosynthesis pathways. Converts mainly geranyllinalool to trimethyltridecatetraene (TMTT). The sequence is that of Trimethyltridecatetraene synthase from Zea mays (Maize).